Reading from the N-terminus, the 1871-residue chain is Girdin (1871 aa).

The Calponin-homology (CH) domain maps to 12 to 132 (QFMTSPLVTW…KLLLLLLGCA (121 aa)). Residues 196–425 (HLKRLIDERD…EMAQKQSMDE (230 aa)) adopt a coiled-coil conformation. Ser-233, Ser-237, and Ser-449 each carry phosphoserine. Positions 458-1385 (TSSRLLKLEM…KIMDQYKFYD (928 aa)) form a coiled coil. Disordered stretches follow at residues 816–842 (ENKS…KRLR) and 1010–1035 (RQDE…RESQ). At Ser-1020 the chain carries Phosphoserine. Residues 1026 to 1035 (EDNKWERESQ) are compositionally biased toward basic and acidic residues. Residue Ser-1387 is modified to Phosphoserine. The interval 1390–1408 (RRRGNWITLKMRKLIKSKK) is phosphoinositide-binding. Over residues 1407-1416 (KKDINRERQK) the composition is skewed to basic and acidic residues. Disordered stretches follow at residues 1407 to 1459 (KKDI…LGTK) and 1559 to 1601 (TTSF…SNNN). The residue at position 1417 (Ser-1417) is a Phosphoserine; by PKB/AKT1. Polar residues-rich tracts occupy residues 1417–1430 (SLTL…SSEG), 1445–1459 (VGSN…LGTK), and 1559–1578 (TTSF…STGS). At Thr-1421 the chain carries Phosphothreonine. Residues 1672–1702 (KTGSPGSEVVTLQQFLEESNKLTSVQIKSSS) carry the GBA motif. Position 1673 is a phosphothreonine (Thr-1673). Ser-1675 carries the post-translational modification Phosphoserine. Phosphoserine; by PKC/PRKCQ is present on Ser-1690. Residues 1713 to 1823 (SLSVSSDFLG…GTTRRTSIHD (111 aa)) are SH2-like; required for interaction with growth factor receptors. A Phosphoserine modification is found at Ser-1717. The interval 1736–1871 (SGKTPGDFYD…KSRSREQQSS (136 aa)) is disordered. Over residues 1743–1763 (FYDRRTTKPEFLRPGPRKTED) the composition is skewed to basic and acidic residues. Tyr-1765 and Tyr-1799 each carry phosphotyrosine. Polar residues-rich tracts occupy residues 1787 to 1799 (SSLS…SNPY) and 1807 to 1818 (SVISTAEGTTRR). Phosphoserine occurs at positions 1820 and 1837. Over residues 1820–1830 (SIHDFLTKDSR) the composition is skewed to basic and acidic residues. Positions 1838–1851 (PPAAADSNTTAASN) are enriched in low complexity. The span at 1854 to 1871 (KVQESRNSKSRSREQQSS) shows a compositional bias: basic and acidic residues.

The protein belongs to the CCDC88 family. Homodimer. Interacts (via GBA motif) with guanine nucleotide-binding protein G(i) alpha subunits GNAI1, GNAI2 and GNAI3. Also interacts (via GNA motif) with guanine nucleotide-binding protein G(s) alpha subunit GNAS. Interaction with G(i) alpha subunits occurs before interaction with GNAS and is regulated by phosphorylation; phosphorylation at Ser-1675 enhances binding to G(i) alpha subunits while phosphorylation at Ser-1690 abolishes G(i) alpha subunit binding, promoting binding to GNAS. Interacts (via C-terminal SH2-like region) with growth factor receptors EGFR, INSR and KDR/VEGFR2 (via their autophosphorylated cytoplasmic tails). Forms a complex with EGFR and GNAI3 which leads to enhanced EGFR signaling and triggering of cell migration; ligand stimulation is required for recruitment of GNAI3 to the complex. Interacts (tyrosine-phosphorylated form) with phosphatidylinositol 3-kinase (PI3K) regulatory subunit PIK3R1/p85a (via SH2 domains); the interaction enables recruitment of PIK3R1 to the EGFR receptor, enhancing PI3K activity and cell migration. Interacts with serine/threonine-protein kinase PRKCQ; the interaction leads to phosphorylation of CCDC88A and inhibition of its guanine nucleotide exchange factor activity. Interacts (via C-terminus) with DISC1; the interaction is direct. Interacts with AKT proteins; the interaction is inhibited in the presence of DISC1. Interacts with AKT1/PKB (via C-terminus). The non-phosphorylated form interacts with phosphatidylinositol 4-phosphate [PI(4)P] and weakly with phosphatidylinositol 3-phosphate [PI(3)P]. Interacts with microtubules. Interacts with actin. In terms of processing, phosphorylation is induced by epidermal growth factor (EGF) in a phosphoinositide 3-kinase (PI3K)-dependent manner. Phosphorylation by AKT1/PKB is necessary for delocalization from the cell membrane and for cell migration. Phosphorylated on tyrosine residues which promotes binding to phosphatidylinositol 3-kinase (PI3K) regulatory subunit PIK3R1/p85a and enhances PI3K activity. Tyrosine-phosphorylated by both receptor and non-receptor tyrosine kinases in vitro. Tyrosine phosphorylation is required for AKT1-dependent phosphorylation of Ser-1417. Phosphorylation at Ser-1690 by PRKCQ disrupts interaction with GNAI3 and inhibits guanine nucleotide exchange factor activity. As to expression, expressed ubiquitously.

Its subcellular location is the cell membrane. The protein localises to the cytoplasm. It localises to the cytosol. The protein resides in the cytoplasmic vesicle. It is found in the cell projection. Its subcellular location is the lamellipodium. The protein localises to the cytoskeleton. It localises to the cilium basal body. The protein resides in the microtubule organizing center. It is found in the centrosome. Its subcellular location is the centriole. Bifunctional modulator of guanine nucleotide-binding proteins (G proteins). Acts as a non-receptor guanine nucleotide exchange factor which binds to and activates guanine nucleotide-binding protein G(i) alpha subunits. Also acts as a guanine nucleotide dissociation inhibitor for guanine nucleotide-binding protein G(s) subunit alpha GNAS. Essential for cell migration. Interacts in complex with G(i) alpha subunits with the EGFR receptor, retaining EGFR at the cell membrane following ligand stimulation and promoting EGFR signaling which triggers cell migration. Binding to Gi-alpha subunits displaces the beta and gamma subunits from the heterotrimeric G-protein complex which enhances phosphoinositide 3-kinase (PI3K)-dependent phosphorylation and kinase activity of AKT1/PKB. Phosphorylation of AKT1/PKB induces the phosphorylation of downstream effectors GSK3 and FOXO1/FKHR, and regulates DNA replication and cell proliferation. Binds in its tyrosine-phosphorylated form to the phosphatidylinositol 3-kinase (PI3K) regulatory subunit PIK3R1 which enables recruitment of PIK3R1 to the EGFR receptor, enhancing PI3K activity and cell migration. Plays a role as a key modulator of the AKT-mTOR signaling pathway, controlling the tempo of the process of newborn neuron integration during adult neurogenesis, including correct neuron positioning, dendritic development and synapse formation. Inhibition of G(s) subunit alpha GNAS leads to reduced cellular levels of cAMP and suppression of cell proliferation. Essential for the integrity of the actin cytoskeleton. Required for formation of actin stress fibers and lamellipodia. May be involved in membrane sorting in the early endosome. Plays a role in ciliogenesis and cilium morphology and positioning and this may partly be through regulation of the localization of scaffolding protein CROCC/Rootletin. This Homo sapiens (Human) protein is Girdin (CCDC88A).